Reading from the N-terminus, the 411-residue chain is Glucose-1-phosphate adenylyltransferase (411 aa).

Alpha-D-glucose 1-phosphate is bound by residues Gly164, 179–180 (EK), and Ser197.

It belongs to the bacterial/plant glucose-1-phosphate adenylyltransferase family. As to quaternary structure, homotetramer.

The catalysed reaction is alpha-D-glucose 1-phosphate + ATP + H(+) = ADP-alpha-D-glucose + diphosphate. It functions in the pathway glycan biosynthesis; glycogen biosynthesis. Its function is as follows. Involved in the biosynthesis of ADP-glucose, a building block required for the elongation reactions to produce glycogen. Catalyzes the reaction between ATP and alpha-D-glucose 1-phosphate (G1P) to produce pyrophosphate and ADP-Glc. The chain is Glucose-1-phosphate adenylyltransferase from Corynebacterium kroppenstedtii (strain DSM 44385 / JCM 11950 / CIP 105744 / CCUG 35717).